The chain runs to 90 residues: Small ribosomal subunit protein uS15 (90 aa).

This sequence belongs to the universal ribosomal protein uS15 family. As to quaternary structure, part of the 30S ribosomal subunit. Forms a bridge to the 50S subunit in the 70S ribosome, contacting the 23S rRNA.

Functionally, one of the primary rRNA binding proteins, it binds directly to 16S rRNA where it helps nucleate assembly of the platform of the 30S subunit by binding and bridging several RNA helices of the 16S rRNA. Forms an intersubunit bridge (bridge B4) with the 23S rRNA of the 50S subunit in the ribosome. The chain is Small ribosomal subunit protein uS15 from Campylobacter curvus (strain 525.92).